The primary structure comprises 438 residues: tRNA-2-methylthio-N(6)-dimethylallyladenosine synthase (438 aa).

The MTTase N-terminal domain occupies 2–118 (KSFYLETFGC…LADMVRDAEL (117 aa)). C11, C47, C81, C157, C161, and C164 together coordinate [4Fe-4S] cluster. Positions 143-373 (PSAEVSRFVT…LALQEEITRQ (231 aa)) constitute a Radical SAM core domain. The region spanning 376 to 438 (QMDIGQVLPV…YRNSHLGERV (63 aa)) is the TRAM domain.

Belongs to the methylthiotransferase family. MiaB subfamily. Monomer. It depends on [4Fe-4S] cluster as a cofactor.

It is found in the cytoplasm. It carries out the reaction N(6)-dimethylallyladenosine(37) in tRNA + (sulfur carrier)-SH + AH2 + 2 S-adenosyl-L-methionine = 2-methylsulfanyl-N(6)-dimethylallyladenosine(37) in tRNA + (sulfur carrier)-H + 5'-deoxyadenosine + L-methionine + A + S-adenosyl-L-homocysteine + 2 H(+). Its function is as follows. Catalyzes the methylthiolation of N6-(dimethylallyl)adenosine (i(6)A), leading to the formation of 2-methylthio-N6-(dimethylallyl)adenosine (ms(2)i(6)A) at position 37 in tRNAs that read codons beginning with uridine. The polypeptide is tRNA-2-methylthio-N(6)-dimethylallyladenosine synthase (Syntrophotalea carbinolica (strain DSM 2380 / NBRC 103641 / GraBd1) (Pelobacter carbinolicus)).